We begin with the raw amino-acid sequence, 959 residues long: Translation initiation factor IF-2 (959 aa).

Basic and acidic residues predominate over residues 1–10; that stretch reads MSDKTNDDKT. Residues 1 to 374 form a disordered region; the sequence is MSDKTNDDKT…SQMQETREKI (374 aa). Residues 27 to 37 are compositionally biased toward polar residues; that stretch reads EQSTVRQNFSH. 2 stretches are compositionally biased toward low complexity: residues 63 to 118 and 128 to 138; these read AAAA…VTKP and QRPGGQQAQRP. Composition is skewed to basic and acidic residues over residues 154–225 and 232–241; these read SEMD…EAAK and ARSERRDDAR. Over residues 246 to 284 the composition is skewed to low complexity; the sequence is GARPQQAGRPQGGRPQPAGRPQQGSPRPAPIIADAAPIA. The segment covering 318-333 has biased composition (basic and acidic residues); sequence PEVRAPKVVKGEDDRR. The tr-type G domain occupies 457 to 626; it reads SRPPVVTIMG…LLQAEMLDLK (170 aa). A G1 region spans residues 466-473; that stretch reads GHVDHGKT. A GTP-binding site is contributed by 466-473; that stretch reads GHVDHGKT. Residues 491-495 are G2; that stretch reads GITQH. Residues 512–515 form a G3 region; sequence DTPG. Residues 512–516 and 566–569 each bind GTP; these read DTPGH and NKID. The tract at residues 566-569 is G4; the sequence is NKID. The G5 stretch occupies residues 602-604; it reads SAK.

Belongs to the TRAFAC class translation factor GTPase superfamily. Classic translation factor GTPase family. IF-2 subfamily.

Its subcellular location is the cytoplasm. In terms of biological role, one of the essential components for the initiation of protein synthesis. Protects formylmethionyl-tRNA from spontaneous hydrolysis and promotes its binding to the 30S ribosomal subunits. Also involved in the hydrolysis of GTP during the formation of the 70S ribosomal complex. This chain is Translation initiation factor IF-2, found in Brucella canis (strain ATCC 23365 / NCTC 10854 / RM-666).